The chain runs to 1009 residues: Dihydropyrimidine dehydrogenase [NADP(+)] (1009 aa).

Residues 69 to 99 (RGALFESARCLKCADAPCQKGCPTQLDIKSF) enclose the 4Fe-4S ferredoxin-type 1 domain. [4Fe-4S] cluster is bound by residues cysteine 78, cysteine 81, cysteine 86, and cysteine 90. Valine 128 is a binding site for FAD. [4Fe-4S] cluster-binding residues include cysteine 129, cysteine 135, cysteine 139, and glutamine 155. FAD contacts are provided by residues 193 to 197 (GCGPT), 217 to 225 (EKEQYLGGL), arginine 234, and leucine 260. Residues 339-342 (AGDT), 363-364 (RR), arginine 370, 436-438 (AFG), and 479-484 (DLVGNG) contribute to the NADP(+) site. 478 to 486 (GDLVGNGTT) serves as a coordination point for FAD. Residues serine 548 and 572–573 (KT) each bind FMN. Substrate contacts are provided by residues asparagine 607 and 666–668 (NLS). The Proton acceptor role is filled by cysteine 669. Lysine 707 contacts FMN. 734-735 (NT) lines the substrate pocket. FMN contacts are provided by residues glycine 765, 791 to 793 (TGG), and 814 to 815 (CS). 4Fe-4S ferredoxin-type domains follow at residues 932-964 (VVALIDEDKCINCGKCYMTCNDSGYQAIKFDGK) and 965-995 (THIPLVTDLCTGCDLCLSVCPVPDCITMVPR). The [4Fe-4S] cluster site is built by cysteine 941, cysteine 944, cysteine 947, cysteine 951, cysteine 974, cysteine 977, cysteine 980, and cysteine 984.

Belongs to the dihydropyrimidine dehydrogenase family. As to quaternary structure, homodimer. [4Fe-4S] cluster is required as a cofactor. Requires FAD as cofactor. FMN serves as cofactor.

Its subcellular location is the cytoplasm. The catalysed reaction is 5,6-dihydrouracil + NADP(+) = uracil + NADPH + H(+). Its pathway is amino-acid biosynthesis; beta-alanine biosynthesis. Involved in pyrimidine base degradation. Catalyzes the reduction of uracil and thymine. The sequence is that of Dihydropyrimidine dehydrogenase [NADP(+)] (pyd1) from Dictyostelium discoideum (Social amoeba).